The chain runs to 483 residues: 5-hydroxytryptamine receptor 3A (483 aa).

A signal peptide spans 1-23 (MPLCIPQVLLALFLSVLIAQGEG). Topologically, residues 24–246 (SRRRATQAHS…MKFYVVIRRR (223 aa)) are extracellular. 3 N-linked (GlcNAc...) asparagine glycosylation sites follow: N109, N175, and N191. C162 and C176 are disulfide-bonded. Residues 247-273 (PLFYAVSLLLPSIFLMVVDIVGFCLPP) traverse the membrane as a helical segment. The Cytoplasmic segment spans residues 274–278 (DSGER). Residues 279 to 297 (VSFKITLLLGYSVFLIIVS) traverse the membrane as a helical segment. Residues 298–307 (DTLPATAIGT) lie on the Extracellular side of the membrane. A helical transmembrane segment spans residues 308-326 (PLIGVYFVVCMALLVISLA). Residues 327 to 460 (ETIFIVQLVH…GYVLDRLLFR (134 aa)) are Cytoplasmic-facing. The disordered stretch occupies residues 393 to 414 (VGSPQDLEKTSRSRDSPLPPPR). Residues 398–407 (DLEKTSRSRD) show a composition bias toward basic and acidic residues. Residues 419 to 455 (AVRGLLQELSSIRHSLEKRDEMREVARDWLRVGYVLD) form an HA-stretch; determines single-channel conductance in 5-HT3 receptors region. The chain crosses the membrane as a helical span at residues 461 to 480 (IYLLAVLAYSITLVTLWSIW). Residues 481-483 (HYS) lie on the Extracellular side of the membrane.

Belongs to the ligand-gated ion channel (TC 1.A.9) family. 5-hydroxytryptamine receptor (TC 1.A.9.2) subfamily. HTR3A sub-subfamily. In terms of assembly, forms homopentameric as well as heteropentameric serotonin-activated cation-selective channel complexes with HTR3B or HTR3C or HTR3D or HTR3E. The homomeric complex is functional but exhibits low conductance with modified voltage dependence, and decreased agonist and antagonist affinity. Heteropentameric complexes display properties which resemble that of neuronal serotonin-activated channels in vivo. Interacts with RIC3. In terms of tissue distribution, expressed in central and peripheral neurons.

Its subcellular location is the postsynaptic cell membrane. The protein resides in the cell membrane. It carries out the reaction Na(+)(in) = Na(+)(out). The catalysed reaction is K(+)(in) = K(+)(out). The enzyme catalyses Ca(2+)(in) = Ca(2+)(out). It catalyses the reaction Mg(2+)(in) = Mg(2+)(out). Forms serotonin (5-hydroxytryptamine/5-HT3)-activated cation-selective channel complexes, which when activated cause fast, depolarizing responses in neurons. The sequence is that of 5-hydroxytryptamine receptor 3A from Rattus norvegicus (Rat).